Here is a 432-residue protein sequence, read N- to C-terminus: Serine--tRNA ligase (432 aa).

236–238 (TSE) serves as a coordination point for L-serine. 267–269 (RSE) is a binding site for ATP. Residue E290 coordinates L-serine. 354–357 (EISS) provides a ligand contact to ATP. Position 390 (S390) interacts with L-serine.

It belongs to the class-II aminoacyl-tRNA synthetase family. Type-1 seryl-tRNA synthetase subfamily. As to quaternary structure, homodimer. The tRNA molecule binds across the dimer.

It localises to the cytoplasm. It carries out the reaction tRNA(Ser) + L-serine + ATP = L-seryl-tRNA(Ser) + AMP + diphosphate + H(+). The enzyme catalyses tRNA(Sec) + L-serine + ATP = L-seryl-tRNA(Sec) + AMP + diphosphate + H(+). It functions in the pathway aminoacyl-tRNA biosynthesis; selenocysteinyl-tRNA(Sec) biosynthesis; L-seryl-tRNA(Sec) from L-serine and tRNA(Sec): step 1/1. In terms of biological role, catalyzes the attachment of serine to tRNA(Ser). Is also able to aminoacylate tRNA(Sec) with serine, to form the misacylated tRNA L-seryl-tRNA(Sec), which will be further converted into selenocysteinyl-tRNA(Sec). The polypeptide is Serine--tRNA ligase (Pseudoalteromonas atlantica (strain T6c / ATCC BAA-1087)).